A 439-amino-acid polypeptide reads, in one-letter code: Serine--tRNA ligase (439 aa).

Position 242-244 (242-244) interacts with L-serine; that stretch reads TAE. Position 273 to 275 (273 to 275) interacts with ATP; it reads RQE. Position 296 (Glu296) interacts with L-serine. An ATP-binding site is contributed by 360–363; it reads EISS. Ser396 provides a ligand contact to L-serine.

It belongs to the class-II aminoacyl-tRNA synthetase family. Type-1 seryl-tRNA synthetase subfamily. In terms of assembly, homodimer. The tRNA molecule binds across the dimer.

The protein localises to the cytoplasm. It catalyses the reaction tRNA(Ser) + L-serine + ATP = L-seryl-tRNA(Ser) + AMP + diphosphate + H(+). The catalysed reaction is tRNA(Sec) + L-serine + ATP = L-seryl-tRNA(Sec) + AMP + diphosphate + H(+). Its pathway is aminoacyl-tRNA biosynthesis; selenocysteinyl-tRNA(Sec) biosynthesis; L-seryl-tRNA(Sec) from L-serine and tRNA(Sec): step 1/1. Catalyzes the attachment of serine to tRNA(Ser). Is also able to aminoacylate tRNA(Sec) with serine, to form the misacylated tRNA L-seryl-tRNA(Sec), which will be further converted into selenocysteinyl-tRNA(Sec). The chain is Serine--tRNA ligase from Oenococcus oeni (strain ATCC BAA-331 / PSU-1).